Reading from the N-terminus, the 65-residue chain is uncharacterized protein (65 aa).

This is an uncharacterized protein from Pasteurella multocida (strain Pm70).